The following is a 142-amino-acid chain: Endoribonuclease YbeY (142 aa).

Residues His100, His104, and His110 each contribute to the Zn(2+) site.

The protein belongs to the endoribonuclease YbeY family. Zn(2+) serves as cofactor.

The protein localises to the cytoplasm. Single strand-specific metallo-endoribonuclease involved in late-stage 70S ribosome quality control and in maturation of the 3' terminus of the 16S rRNA. This is Endoribonuclease YbeY from Helicobacter pylori (strain G27).